Here is a 220-residue protein sequence, read N- to C-terminus: ATP-dependent Clp protease proteolytic subunit (220 aa).

The active-site Nucleophile is Ser-122. Residue His-147 is part of the active site.

This sequence belongs to the peptidase S14 family. Fourteen ClpP subunits assemble into 2 heptameric rings which stack back to back to give a disk-like structure with a central cavity, resembling the structure of eukaryotic proteasomes.

It localises to the cytoplasm. The catalysed reaction is Hydrolysis of proteins to small peptides in the presence of ATP and magnesium. alpha-casein is the usual test substrate. In the absence of ATP, only oligopeptides shorter than five residues are hydrolyzed (such as succinyl-Leu-Tyr-|-NHMec, and Leu-Tyr-Leu-|-Tyr-Trp, in which cleavage of the -Tyr-|-Leu- and -Tyr-|-Trp bonds also occurs).. Cleaves peptides in various proteins in a process that requires ATP hydrolysis. Has a chymotrypsin-like activity. Plays a major role in the degradation of misfolded proteins. The sequence is that of ATP-dependent Clp protease proteolytic subunit from Colwellia psychrerythraea (strain 34H / ATCC BAA-681) (Vibrio psychroerythus).